A 522-amino-acid chain; its full sequence is Chromosomal replication initiator protein DnaA (522 aa).

Positions 1 to 71 (MQDFWHAASA…QSLACDYWEM (71 aa)) are domain I, interacts with DnaA modulators. The tract at residues 71–185 (MQVDVQFVLD…PVDDTVHERS (115 aa)) is domain II. The segment at 186–402 (RLNPILTFDN…GALRKILAYS (217 aa)) is domain III, AAA+ region. G230, G232, K233, and T234 together coordinate ATP. The tract at residues 403–522 (NFHGKEITIE…LHVLEQTLKG (120 aa)) is domain IV, binds dsDNA.

This sequence belongs to the DnaA family. Oligomerizes as a right-handed, spiral filament on DNA at oriC.

The protein resides in the cytoplasm. Its function is as follows. Plays an essential role in the initiation and regulation of chromosomal replication. ATP-DnaA binds to the origin of replication (oriC) to initiate formation of the DNA replication initiation complex once per cell cycle. Binds the DnaA box (a 9 base pair repeat at the origin) and separates the double-stranded (ds)DNA. Forms a right-handed helical filament on oriC DNA; dsDNA binds to the exterior of the filament while single-stranded (ss)DNA is stabiized in the filament's interior. The ATP-DnaA-oriC complex binds and stabilizes one strand of the AT-rich DNA unwinding element (DUE), permitting loading of DNA polymerase. After initiation quickly degrades to an ADP-DnaA complex that is not apt for DNA replication. Binds acidic phospholipids. The protein is Chromosomal replication initiator protein DnaA of Ralstonia nicotianae (strain ATCC BAA-1114 / GMI1000) (Ralstonia solanacearum).